We begin with the raw amino-acid sequence, 579 residues long: MKRDLHQFQGPPDTRFPNHGTANTGSSSKDKMMMVKEEEDGGNMDELLAVLGYKVRSSEMAEVALKLEQLETMMGNVQEDGLSNLATDTVHYNPSELYSWLDNMLTEFNPPPPEINNSFLAGAGGSDYDLKAIPGNAIYARSDQFAIDSSSSSNQAGDNSQSTKRLKSCSSPDSLVTGTTVTTTTTESTRSVGLAAESTRSMVLVDSQENGVRLVHALMACAEAIQNNDLSIAEALVKQIGFLAVSQAGAMRKVATYFAEALARRIYRLSPPQTQIDHSLSDTLQMHFYETCPYLKFAHFTANQAILEAFEGKKRVHVIDFSMNQGLQWPALMQALALREGGPPVFRLTGIGPPAADNSDHLHEVGCKLAQLAEAIHVEFEYRGFVANSLADLDASMLELRPSEIEAVAVNSVFELHKLLGRTGGIEKVLGVVKQIKPVIFTVVEQESSHNGPVFLDRFTESLHYYSTLFDSLEGVPSSQDKVMSEVYLGKQICNLVACEGPDRVERHETLSQWANRFGSSGFAPAHLGSNAFKQASMLLALFNGGEGYRVEENNGCLMLGWHTRPLITTSAWKLSAAH.

The tract at residues 1–31 is disordered; that stretch reads MKRDLHQFQGPPDTRFPNHGTANTGSSSKDK. Positions 45–49 match the DELLA motif motif; that stretch reads DELLA. 2 stretches are compositionally biased toward low complexity: residues 149-162 and 174-183; these read SSSS…NSQS and SLVTGTTVTT. The segment at 149 to 183 is disordered; that stretch reads SSSSSNQAGDNSQSTKRLKSCSSPDSLVTGTTVTT. Residues 205–574 form the GRAS domain; that stretch reads VDSQENGVRL…RPLITTSAWK (370 aa). The leucine repeat I (LRI) stretch occupies residues 212 to 266; sequence VRLVHALMACAEAIQNNDLSIAEALVKQIGFLAVSQAGAMRKVATYFAEALARRI. Residues 285 to 350 form a VHIID region; that stretch reads QMHFYETCPY…GGPPVFRLTG (66 aa). Residues 316–320 carry the VHIID motif; it reads VHVID. The segment at 364-396 is leucine repeat II (LRII); it reads EVGCKLAQLAEAIHVEFEYRGFVANSLADLDAS. Residues 408–495 form a PFYRE region; sequence VAVNSVFELH…EVYLGKQICN (88 aa). The LXXLL motif motif lies at 416–420; that stretch reads LHKLL. The tract at residues 498–574 is SAW; it reads ACEGPDRVER…RPLITTSAWK (77 aa).

It belongs to the GRAS family. DELLA subfamily. Post-translationally, phosphorylated. Ubiquitinated. Upon GA application it is ubiquitinated, leading to its subsequent degradation.

Its subcellular location is the nucleus. Functionally, probable transcriptional regulator that acts as a repressor of the gibberellin (GA) signaling pathway. Probably acts by participating in large multiprotein complexes that represses transcription of GA-inducible genes. Upon GA application, it is degraded by the proteasome, allowing the GA signaling pathway. The protein is DELLA protein RGA2 (RGA2) of Brassica campestris (Field mustard).